The sequence spans 278 residues: Biotin synthase (278 aa).

In terms of domain architecture, Radical SAM core spans 1–227; it reads MQIMLCAISN…QSVVMVAGGR (227 aa). Cys-16, Cys-20, and Cys-23 together coordinate [4Fe-4S] cluster. [2Fe-2S] cluster is bound by residues Cys-60, Cys-95, and Cys-153.

The protein belongs to the radical SAM superfamily. Biotin synthase family. In terms of assembly, homodimer. [4Fe-4S] cluster serves as cofactor. [2Fe-2S] cluster is required as a cofactor.

The catalysed reaction is (4R,5S)-dethiobiotin + (sulfur carrier)-SH + 2 reduced [2Fe-2S]-[ferredoxin] + 2 S-adenosyl-L-methionine = (sulfur carrier)-H + biotin + 2 5'-deoxyadenosine + 2 L-methionine + 2 oxidized [2Fe-2S]-[ferredoxin]. It participates in cofactor biosynthesis; biotin biosynthesis; biotin from 7,8-diaminononanoate: step 2/2. In terms of biological role, catalyzes the conversion of dethiobiotin (DTB) to biotin by the insertion of a sulfur atom into dethiobiotin via a radical-based mechanism. The protein is Biotin synthase of Campylobacter jejuni subsp. doylei (strain ATCC BAA-1458 / RM4099 / 269.97).